A 271-amino-acid chain; its full sequence is ATP synthase subunit delta (271 aa).

This sequence belongs to the ATPase delta chain family. F-type ATPases have 2 components, F(1) - the catalytic core - and F(0) - the membrane proton channel. F(1) has five subunits: alpha(3), beta(3), gamma(1), delta(1), epsilon(1). F(0) has three main subunits: a(1), b(2) and c(10-14). The alpha and beta chains form an alternating ring which encloses part of the gamma chain. F(1) is attached to F(0) by a central stalk formed by the gamma and epsilon chains, while a peripheral stalk is formed by the delta and b chains.

It localises to the cell membrane. F(1)F(0) ATP synthase produces ATP from ADP in the presence of a proton or sodium gradient. F-type ATPases consist of two structural domains, F(1) containing the extramembraneous catalytic core and F(0) containing the membrane proton channel, linked together by a central stalk and a peripheral stalk. During catalysis, ATP synthesis in the catalytic domain of F(1) is coupled via a rotary mechanism of the central stalk subunits to proton translocation. Functionally, this protein is part of the stalk that links CF(0) to CF(1). It either transmits conformational changes from CF(0) to CF(1) or is implicated in proton conduction. The chain is ATP synthase subunit delta from Beutenbergia cavernae (strain ATCC BAA-8 / DSM 12333 / CCUG 43141 / JCM 11478 / NBRC 16432 / NCIMB 13614 / HKI 0122).